Here is a 422-residue protein sequence, read N- to C-terminus: Calpain-2 catalytic subunit (422 aa).

The Calpain catalytic domain occupies 1–66 (QKLIRIRNPW…YSRLEICNLT (66 aa)). Residue Asn-8 is part of the active site. Positions 14, 21, and 45 each coordinate Ca(2+). The interval 67 to 236 (PDTLTSDTYK…KKADYQAVDD (170 aa)) is domain III. The interval 237-251 (EIEADLEEADVSEDD) is linker. Residues 252–422 (IDDGFRRLFA…LISWLCFSVL (171 aa)) form a domain IV region. Ca(2+) contacts are provided by Ala-264, Asp-267, Glu-269, Glu-274, Asp-307, Asp-309, Thr-311, Lys-313, Glu-318, Asp-337, Asp-339, Ser-341, Thr-343, Glu-348, Asp-380, and Asn-383. 2 consecutive EF-hand domains span residues 294–327 (LSIETCKIMVDMLDSDGTGKLGLKEFYVLWTKIQ) and 324–359 (TKIQKYQKIYREIDVDRSGTMNSYEMRKALEEAGFK). Residues 389–422 (VRLETLFKIFKQLDPDNTGMIQLDLISWLCFSVL) form the EF-hand 3 domain.

The protein belongs to the peptidase C2 family. As to quaternary structure, forms a heterodimer with a small (regulatory) subunit (CAPNS1). Interacts with CPEB3; this leads to cleavage of CPEB3. It depends on Ca(2+) as a cofactor. In terms of tissue distribution, ubiquitous.

It localises to the cytoplasm. It is found in the cell membrane. The enzyme catalyses Broad endopeptidase specificity.. With respect to regulation, activated by 200-1000 micromolar concentrations of calcium and inhibited by calpastatin. In terms of biological role, calcium-regulated non-lysosomal thiol-protease which catalyzes limited proteolysis of substrates involved in cytoskeletal remodeling and signal transduction. Proteolytically cleaves MYOC at 'Arg-226'. Proteolytically cleaves CPEB3 following neuronal stimulation which abolishes CPEB3 translational repressor activity, leading to translation of CPEB3 target mRNAs. The chain is Calpain-2 catalytic subunit (CAPN2) from Oryctolagus cuniculus (Rabbit).